A 245-amino-acid polypeptide reads, in one-letter code: Adenosylcobinamide-GDP ribazoletransferase (245 aa).

5 helical membrane-spanning segments follow: residues 31-51 (FGRAVLCYPLVGVLIGVVLYG), 61-81 (PLLQAALLLSLWVALSGALHL), 113-133 (AAVVALVLVLLLKFGALAALL), 138-158 (PGLLLLAPWLARSSLPLLFLT), and 192-212 (LAFGLSGLLALLVTLMLFAWL).

Belongs to the CobS family. The cofactor is Mg(2+).

Its subcellular location is the cell inner membrane. It carries out the reaction alpha-ribazole + adenosylcob(III)inamide-GDP = adenosylcob(III)alamin + GMP + H(+). It catalyses the reaction alpha-ribazole 5'-phosphate + adenosylcob(III)inamide-GDP = adenosylcob(III)alamin 5'-phosphate + GMP + H(+). It participates in cofactor biosynthesis; adenosylcobalamin biosynthesis; adenosylcobalamin from cob(II)yrinate a,c-diamide: step 7/7. Joins adenosylcobinamide-GDP and alpha-ribazole to generate adenosylcobalamin (Ado-cobalamin). Also synthesizes adenosylcobalamin 5'-phosphate from adenosylcobinamide-GDP and alpha-ribazole 5'-phosphate. In Pseudomonas paraeruginosa (strain DSM 24068 / PA7) (Pseudomonas aeruginosa (strain PA7)), this protein is Adenosylcobinamide-GDP ribazoletransferase.